A 388-amino-acid chain; its full sequence is 3-dehydroquinate synthase (388 aa).

It belongs to the archaeal-type DHQ synthase family.

The catalysed reaction is 2-amino-2,3,7-trideoxy-D-lyxo-hept-6-ulosonate + NAD(+) + H2O = 3-dehydroquinate + NH4(+) + NADH + H(+). Catalyzes the oxidative deamination and cyclization of 2-amino-3,7-dideoxy-D-threo-hept-6-ulosonic acid (ADH) to yield 3-dehydroquinate (DHQ), which is fed into the canonical shikimic pathway of aromatic amino acid biosynthesis. In Haloarcula marismortui (strain ATCC 43049 / DSM 3752 / JCM 8966 / VKM B-1809) (Halobacterium marismortui), this protein is 3-dehydroquinate synthase.